The chain runs to 418 residues: MVSSQPVPFDDGGKRRKKKRKTRAMESFTGKFADLYRLTDELLGEGAYAKVQGCVSLQNGKDYAVKIVEKKAGHSRSRVFREVETLYQCQGNKNILELIEFCEDDARFYLVFEKLLGGSILSHIQKRKHFNEREASKVVKDIASALDFLHTKGIAHRDLKPENILCEFKDKVSPVKICDFDLGSGVKLNSACTTITTPELTTPCGSAEYMAPEVVEVFTEEATFYDKRCDLWSLGVILYIMLSGYPPFVGNCGTDCGWDRGEVCRVCQNKLFESIQEGKYEFPEKDWSHISISAKDLISKLLVRDAKERLSAFQVLQHPWLQGDAPERGLPTPLVLQRNSSTKDLTIFAAEAIAFNRQLSQHDNDLNEEDESFIHAVCSMRLSPPSKSRLAKRRAQAHARKGGSHPTHSTVTASQGTP.

The segment at 1 to 23 (MVSSQPVPFDDGGKRRKKKRKTR) is disordered. The region spanning 37–321 (RLTDELLGEG…AFQVLQHPWL (285 aa)) is the Protein kinase domain. ATP is bound by residues 43-51 (LGEGAYAKV) and lysine 66. The active-site Proton acceptor is the aspartate 158. Positions 384–418 (PPSKSRLAKRRAQAHARKGGSHPTHSTVTASQGTP) are disordered. The span at 389 to 403 (RLAKRRAQAHARKGG) shows a compositional bias: basic residues. Positions 406–418 (PTHSTVTASQGTP) are enriched in polar residues.

It belongs to the protein kinase superfamily. CAMK Ser/Thr protein kinase family. Mg(2+) is required as a cofactor.

It carries out the reaction L-seryl-[protein] + ATP = O-phospho-L-seryl-[protein] + ADP + H(+). It catalyses the reaction L-threonyl-[protein] + ATP = O-phospho-L-threonyl-[protein] + ADP + H(+). Its function is as follows. May play a role in the response to environmental stress and cytokines. Appears to regulate translation by phosphorylating EIF4E, thus increasing the affinity of this protein for the 7-methylguanosine-containing mRNA cap. This is MAP kinase-interacting serine/threonine-protein kinase 1 (mknk1) from Xenopus laevis (African clawed frog).